The primary structure comprises 597 residues: Arginine--tRNA ligase (597 aa).

The 'HIGH' region motif lies at 125–135; it reads PNTNKPLHLGH.

This sequence belongs to the class-I aminoacyl-tRNA synthetase family. In terms of assembly, monomer.

Its subcellular location is the cytoplasm. It carries out the reaction tRNA(Arg) + L-arginine + ATP = L-arginyl-tRNA(Arg) + AMP + diphosphate. The chain is Arginine--tRNA ligase from Parabacteroides distasonis (strain ATCC 8503 / DSM 20701 / CIP 104284 / JCM 5825 / NCTC 11152).